The sequence spans 294 residues: ATP synthase gamma chain (294 aa).

This sequence belongs to the ATPase gamma chain family. In terms of assembly, F-type ATPases have 2 components, CF(1) - the catalytic core - and CF(0) - the membrane proton channel. CF(1) has five subunits: alpha(3), beta(3), gamma(1), delta(1), epsilon(1). CF(0) has three main subunits: a, b and c.

The protein resides in the cell inner membrane. In terms of biological role, produces ATP from ADP in the presence of a proton gradient across the membrane. The gamma chain is believed to be important in regulating ATPase activity and the flow of protons through the CF(0) complex. This Caulobacter sp. (strain K31) protein is ATP synthase gamma chain.